The primary structure comprises 350 residues: Ribosomal RNA large subunit methyltransferase M (350 aa).

Residues 217-220 (APGG), aspartate 236, aspartate 256, and aspartate 272 contribute to the S-adenosyl-L-methionine site. Lysine 301 (proton acceptor) is an active-site residue.

The protein belongs to the class I-like SAM-binding methyltransferase superfamily. RNA methyltransferase RlmE family. RlmM subfamily. As to quaternary structure, monomer.

It is found in the cytoplasm. The enzyme catalyses cytidine(2498) in 23S rRNA + S-adenosyl-L-methionine = 2'-O-methylcytidine(2498) in 23S rRNA + S-adenosyl-L-homocysteine + H(+). Functionally, catalyzes the 2'-O-methylation at nucleotide C2498 in 23S rRNA. This Cellvibrio japonicus (strain Ueda107) (Pseudomonas fluorescens subsp. cellulosa) protein is Ribosomal RNA large subunit methyltransferase M.